The chain runs to 361 residues: sn-glycerol-3-phosphate import ATP-binding protein UgpC (361 aa).

Positions 4–235 (LSLKGVRKSY…PATVFVAGFI (232 aa)) constitute an ABC transporter domain. 37 to 44 (GPSGCGKS) lines the ATP pocket.

The protein belongs to the ABC transporter superfamily. sn-glycerol-3-phosphate importer (TC 3.A.1.1.3) family. In terms of assembly, the complex is composed of two ATP-binding proteins (UgpC), two transmembrane proteins (UgpA and UgpE) and a solute-binding protein (UgpB).

It localises to the cell inner membrane. It carries out the reaction sn-glycerol 3-phosphate(out) + ATP + H2O = sn-glycerol 3-phosphate(in) + ADP + phosphate + H(+). In terms of biological role, part of the ABC transporter complex UgpBAEC involved in sn-glycerol-3-phosphate (G3P) import. Responsible for energy coupling to the transport system. The protein is sn-glycerol-3-phosphate import ATP-binding protein UgpC of Burkholderia cenocepacia (strain HI2424).